A 112-amino-acid chain; its full sequence is Small ribosomal subunit protein uS17 (112 aa).

This sequence belongs to the universal ribosomal protein uS17 family. In terms of assembly, part of the 30S ribosomal subunit.

In terms of biological role, one of the primary rRNA binding proteins, it binds specifically to the 5'-end of 16S ribosomal RNA. This is Small ribosomal subunit protein uS17 from Haloarcula marismortui (strain ATCC 43049 / DSM 3752 / JCM 8966 / VKM B-1809) (Halobacterium marismortui).